The sequence spans 525 residues: uncharacterized protein (525 aa).

The first 21 residues, 1-21 (MLECLSALLVLFAGGGGSVLA), serve as a signal peptide directing secretion. Over 22–448 (AVQSKTVADP…ISAASQLDKR (427 aa)) the chain is Extracellular. Positions 242–264 (KVSSENCSKDTDDKSGSKKERNT) are disordered. Residues 449–469 (IFIFTAITVSITTLMMLGFSY) traverse the membrane as a helical segment. Topologically, residues 470–525 (RSRVSFRDHSIDDSDDDNDWSDDEVEFDEEYFYSLPVSIPEKGISLDKMAQQLGVE) are cytoplasmic.

It is found in the membrane. This is an uncharacterized protein from Saccharomyces cerevisiae (strain ATCC 204508 / S288c) (Baker's yeast).